A 315-amino-acid polypeptide reads, in one-letter code: Transaldolase (315 aa).

Lys-125 serves as the catalytic Schiff-base intermediate with substrate.

This sequence belongs to the transaldolase family. Type 1 subfamily. Homodimer.

The protein resides in the cytoplasm. It catalyses the reaction D-sedoheptulose 7-phosphate + D-glyceraldehyde 3-phosphate = D-erythrose 4-phosphate + beta-D-fructose 6-phosphate. It participates in carbohydrate degradation; pentose phosphate pathway; D-glyceraldehyde 3-phosphate and beta-D-fructose 6-phosphate from D-ribose 5-phosphate and D-xylulose 5-phosphate (non-oxidative stage): step 2/3. Functionally, transaldolase is important for the balance of metabolites in the pentose-phosphate pathway. The protein is Transaldolase of Leptothrix cholodnii (strain ATCC 51168 / LMG 8142 / SP-6) (Leptothrix discophora (strain SP-6)).